The sequence spans 406 residues: Argininosuccinate synthase (406 aa).

ATP is bound at residue 9–17 (AYSGGLDTS). Tyr86 lines the L-citrulline pocket. Gly116 contributes to the ATP binding site. Positions 118, 122, and 123 each coordinate L-aspartate. Asn122 serves as a coordination point for L-citrulline. Positions 126, 174, 183, 259, and 271 each coordinate L-citrulline.

Belongs to the argininosuccinate synthase family. Type 1 subfamily. As to quaternary structure, homotetramer.

It is found in the cytoplasm. It catalyses the reaction L-citrulline + L-aspartate + ATP = 2-(N(omega)-L-arginino)succinate + AMP + diphosphate + H(+). It functions in the pathway amino-acid biosynthesis; L-arginine biosynthesis; L-arginine from L-ornithine and carbamoyl phosphate: step 2/3. The sequence is that of Argininosuccinate synthase from Geobacillus thermodenitrificans (strain NG80-2).